Consider the following 385-residue polypeptide: 1-deoxy-D-xylulose 5-phosphate reductoisomerase (385 aa).

Positions 10, 11, 12, 13, and 124 each coordinate NADPH. Lys-125 contacts 1-deoxy-D-xylulose 5-phosphate. Glu-126 is an NADPH binding site. Asp-150 is a binding site for Mn(2+). Ser-151, Glu-152, Ser-176, and His-199 together coordinate 1-deoxy-D-xylulose 5-phosphate. Glu-152 is a binding site for Mn(2+). An NADPH-binding site is contributed by Gly-205. Positions 212, 217, 218, and 221 each coordinate 1-deoxy-D-xylulose 5-phosphate. Position 221 (Glu-221) interacts with Mn(2+).

The protein belongs to the DXR family. Requires Mg(2+) as cofactor. Mn(2+) serves as cofactor.

The enzyme catalyses 2-C-methyl-D-erythritol 4-phosphate + NADP(+) = 1-deoxy-D-xylulose 5-phosphate + NADPH + H(+). It functions in the pathway isoprenoid biosynthesis; isopentenyl diphosphate biosynthesis via DXP pathway; isopentenyl diphosphate from 1-deoxy-D-xylulose 5-phosphate: step 1/6. Its function is as follows. Catalyzes the NADPH-dependent rearrangement and reduction of 1-deoxy-D-xylulose-5-phosphate (DXP) to 2-C-methyl-D-erythritol 4-phosphate (MEP). The chain is 1-deoxy-D-xylulose 5-phosphate reductoisomerase from Clostridium kluyveri (strain NBRC 12016).